Reading from the N-terminus, the 62-residue chain is Small polypeptide DEVIL 17 (62 aa).

A required for DVL/RTFL small polypeptide activity region spans residues 27–58; the sequence is RRNKGCLAMVKERRSRFYIARRCILMLLCWHK. A helical membrane pass occupies residues 39-56; it reads RRSRFYIARRCILMLLCW.

This sequence belongs to the DVL/RTFL small polypeptides family.

Its subcellular location is the cell membrane. Functionally, small polypeptide acting as a regulatory molecule which coordinates cellular responses required for differentiation, growth and development, probably by restricting polar cell proliferation in lateral organs and coordinating socket cell recruitment and differentiation at trichome sites. The chain is Small polypeptide DEVIL 17 from Arabidopsis thaliana (Mouse-ear cress).